The chain runs to 258 residues: Regulatory protein RecX (258 aa).

Belongs to the RecX family.

It localises to the cytoplasm. Modulates RecA activity. This is Regulatory protein RecX from Streptococcus sanguinis (strain SK36).